A 553-amino-acid chain; its full sequence is Cytokine-like nuclear factor N-PAC (553 aa).

Positions 8–66 (LGDLVWGKLGRYPPWPGKIVNPPKDLKKPRGKKCFFVKFFGTEDHAWIKVEQLKPYHAH) constitute a PWWP domain. Composition is skewed to basic and acidic residues over residues 92 to 145 (RAKG…EGKK) and 162 to 182 (RAQEQSPRKRGRPPKDEKDLS). Positions 92–190 (RAKGKDQTSS…LSIPESSTVK (99 aa)) are disordered. Serine 130 bears the Phosphoserine mark. Lysine 135 is covalently cross-linked (Glycyl lysine isopeptide (Lys-Gly) (interchain with G-Cter in SUMO2)). Residue serine 167 is modified to Phosphoserine. The a.T hook DNA-binding region spans 168–180 (PRKRGRPPKDEKD). Glycyl lysine isopeptide (Lys-Gly) (interchain with G-Cter in SUMO2) cross-links involve residues lysine 176, lysine 179, lysine 201, and lysine 211. Positions 214–217 (DPHF) are interaction with histone H3. The tract at residues 216–225 (HFHHFLLSQT) is interaction with KDM1B. Residues lysine 227, lysine 237, lysine 240, and lysine 269 each participate in a glycyl lysine isopeptide (Lys-Gly) (interchain with G-Cter in SUMO2) cross-link. The dehydrogenase domain stretch occupies residues 261–553 (GSVTPTDKKI…MSAVYRAYIH (293 aa)). Position 271 to 285 (271 to 285 (GFLGLGLMGSGIVSN)) interacts with NAD(+). Lysine 302 participates in a covalent cross-link: Glycyl lysine isopeptide (Lys-Gly) (interchain with G-Cter in SUMO2). Residues threonine 362 and lysine 505 each coordinate NAD(+). Phosphoserine is present on serine 540.

It belongs to the HIBADH-related family. NP60 subfamily. Homotetramere. Interacts with MAPK14. Interacts with KDM1B at nucleosomes; this interaction stimulates H3K4me1 and H3K4me2 demethylation. Binds to mononucleosomes. Interacts with GATA4; the interaction is required for a synergistic activation of GATA4 target genes transcription.

It is found in the nucleus. It localises to the chromosome. In terms of biological role, cytokine-like nuclear factor with chromatin gene reader activity involved in chromatin modification and regulation of gene expression. Acts as a nucleosome-destabilizing factor that is recruited to genes during transcriptional activation. Recognizes and binds histone H3 without a preference for specific epigenetic markers and also binds DNA. Interacts with KDM1B and promotes its histone demethylase activity by facilitating the capture of H3 tails, they form a multifunctional enzyme complex that modifies transcribed chromatin and facilitates Pol II transcription through nucleosomes. Stimulates the acetylation of 'Lys-56' of nucleosomal histone H3 (H3K56ac) by EP300. With GATA4, co-binds a defined set of heart development genes and coregulates their expression during cardiomyocyte differentiation. Regulates p38 MAP kinase activity by mediating stress activation of MAPK14/p38alpha and specifically regulating MAPK14 signaling. Indirectly promotes phosphorylation of MAPK14 and activation of ATF2. The phosphorylation of MAPK14 requires upstream activity of MAP2K4 and MAP2K6. The polypeptide is Cytokine-like nuclear factor N-PAC (GLYR1) (Bos taurus (Bovine)).